Here is a 416-residue protein sequence, read N- to C-terminus: Trifolitoxin-processing protein TfxD (416 aa).

The next 11 membrane-spanning stretches (helical) occupy residues 24-44 (MIPNVADTIVVTLIGATALQV), 48-68 (VLITILTLNIAFLNFCSLICM), 79-99 (VFAAIVRAACMMIGVYLALIA), 114-134 (IAFIALSALRPFVAGWNAYCA), 153-173 (SSLIYAGVNLLFVGLSHFAGT), 176-196 (SIISLLIGVYLALFHNALAYA), 230-250 (ASFINMLEMGFLALVGWVVAA), 255-275 (IAVFYFPFFTLVELTSGLAIG), 295-315 (VLIAVYSTYSLLCFLIYVGLI), 322-342 (IFALPLSLAGLALLFLICDGL), and 372-392 (VILALAAVLGSVQALAIALVL).

It is found in the cell membrane. In terms of biological role, the actions of the proteins TfxB, TfxD and TfxF are implicated in the processing of the inactive trifolitoxin (TfxA) precursor into the active peptide. The chain is Trifolitoxin-processing protein TfxD (tfxD) from Rhizobium leguminosarum bv. trifolii.